We begin with the raw amino-acid sequence, 145 residues long: Large-conductance mechanosensitive channel (145 aa).

The next 2 helical transmembrane spans lie at 16 to 36 (VVDL…VTSF) and 83 to 103 (GVFI…FMVI).

Belongs to the MscL family. In terms of assembly, homopentamer.

The protein localises to the cell inner membrane. Functionally, channel that opens in response to stretch forces in the membrane lipid bilayer. May participate in the regulation of osmotic pressure changes within the cell. This Geobacter metallireducens (strain ATCC 53774 / DSM 7210 / GS-15) protein is Large-conductance mechanosensitive channel.